The following is a 175-amino-acid chain: Catabolic 3-dehydroquinase (175 aa).

Tyr26 (proton acceptor) is an active-site residue. Residues Asn104, His110, and Asp117 each contribute to the substrate site. The active-site Proton donor is the His130. Substrate-binding positions include 131 to 132 (VS) and Arg141.

This sequence belongs to the type-II 3-dehydroquinase family. Homododecamer. Adopts a ring-like structure, composed of an arrangement of two hexameric rings stacked on top of one another.

The enzyme catalyses 3-dehydroquinate = 3-dehydroshikimate + H2O. It participates in aromatic compound metabolism; 3,4-dihydroxybenzoate biosynthesis; 3,4-dihydroxybenzoate from 3-dehydroquinate: step 1/2. Its function is as follows. Is involved in the catabolism of quinate. Allows the utilization of quinate as carbon source via the beta-ketoadipate pathway. The chain is Catabolic 3-dehydroquinase from Sordaria macrospora (strain ATCC MYA-333 / DSM 997 / K(L3346) / K-hell).